The following is a 260-amino-acid chain: Ribonuclease PH (260 aa).

Phosphate-binding positions include Arg87 and Gly125 to Arg127. A disordered region spans residues Leu232 to Arg260. The segment covering Ala248–Arg260 has biased composition (gly residues).

The protein belongs to the RNase PH family. Homohexameric ring arranged as a trimer of dimers.

The catalysed reaction is tRNA(n+1) + phosphate = tRNA(n) + a ribonucleoside 5'-diphosphate. In terms of biological role, phosphorolytic 3'-5' exoribonuclease that plays an important role in tRNA 3'-end maturation. Removes nucleotide residues following the 3'-CCA terminus of tRNAs; can also add nucleotides to the ends of RNA molecules by using nucleoside diphosphates as substrates, but this may not be physiologically important. Probably plays a role in initiation of 16S rRNA degradation (leading to ribosome degradation) during starvation. The sequence is that of Ribonuclease PH from Parafrankia sp. (strain EAN1pec).